Consider the following 360-residue polypeptide: Mitogen-activated protein kinase 14 (360 aa).

Serine 2 carries the N-acetylserine modification. The residue at position 2 (serine 2) is a Phosphoserine. Position 16 is a phosphothreonine (threonine 16). Residues 24–308 (YQNLSPVGSG…AAQALAHAYF (285 aa)) enclose the Protein kinase domain. Residues 30 to 38 (VGSGAYGSV) and lysine 53 contribute to the ATP site. N6-acetyllysine is present on lysine 53. The active-site Proton acceptor is aspartate 150. Lysine 152 bears the N6-acetyllysine mark. At threonine 180 the chain carries Phosphothreonine; by MAP2K3, MAP2K4, MAP2K6 and autocatalysis. Phosphotyrosine; by MAP2K3, MAP2K4, MAP2K6 and autocatalysis is present on tyrosine 182. Threonine 263 is modified (phosphothreonine). At tyrosine 323 the chain carries Phosphotyrosine; by ZAP70.

This sequence belongs to the protein kinase superfamily. CMGC Ser/Thr protein kinase family. MAP kinase subfamily. Component of a signaling complex containing at least AKAP13, PKN1, MAPK14, ZAK and MAP2K3. Within this complex, AKAP13 interacts directly with PKN1, which in turn recruits MAPK14, MAP2K3 and ZAK. Binds to a kinase interaction motif within the protein tyrosine phosphatase, PTPRR. This interaction retains MAPK14 in the cytoplasm and prevents nuclear accumulation. Interacts with SPAG9 and GADD45A. Interacts with CDC25B, CDC25C, DUSP1, DUSP10, DUSP16, NP60, SUPT20H and TAB1. Interacts with casein kinase II subunits CSNK2A1 and CSNK2B. Interacts with PPM1D. Interacts with CDK5RAP3; recruits PPM1D to MAPK14 and may regulate its dephosphorylation. Interacts with DUSP2; this interaction does not lead to catalytic activation of DUSP2 and dephosphrylation of MAPK14. The cofactor is Mg(2+). In terms of processing, dually phosphorylated on Thr-180 and Tyr-182 by the MAP2Ks MAP2K3/MKK3, MAP2K4/MKK4 and MAP2K6/MKK6 in response to inflammatory cytokines, environmental stress or growth factors, which activates the enzyme. Dual phosphorylation can also be mediated by TAB1-mediated autophosphorylation. TCR engagement in T-cells also leads to Tyr-323 phosphorylation by ZAP70. Dephosphorylated and inactivated by DUPS1, DUSP10 and DUSP16. PPM1D also mediates dephosphorylation and inactivation of MAPK14. Acetylated at Lys-53 and Lys-152 by KAT2B and EP300. Acetylation at Lys-53 increases the affinity for ATP and enhances kinase activity. Lys-53 and Lys-152 are deacetylated by HDAC3. Post-translationally, ubiquitinated. Ubiquitination leads to degradation by the proteasome pathway.

Its subcellular location is the cytoplasm. The protein localises to the nucleus. It catalyses the reaction L-seryl-[protein] + ATP = O-phospho-L-seryl-[protein] + ADP + H(+). The catalysed reaction is L-threonyl-[protein] + ATP = O-phospho-L-threonyl-[protein] + ADP + H(+). Its activity is regulated as follows. Activated by cell stresses such as DNA damage, heat shock, osmotic shock, anisomycin and sodium arsenite, as well as pro-inflammatory stimuli such as bacterial lipopolysaccharide (LPS) and interleukin-1. Activation occurs through dual phosphorylation of Thr-180 and Tyr-182 by either of two dual specificity kinases, MAP2K3/MKK3 or MAP2K6/MKK6, and potentially also MAP2K4/MKK4, as well as by TAB1-mediated autophosphorylation. MAPK14 phosphorylated on both Thr-180 and Tyr-182 is 10-20-fold more active than MAPK14 phosphorylated only on Thr-180, whereas MAPK14 phosphorylated on Tyr-182 alone is inactive. whereas Thr-180 is necessary for catalysis, Tyr-182 may be required for auto-activation and substrate recognition. Phosphorylated at Tyr-323 by ZAP70 in an alternative activation pathway in response to TCR signaling in T-cells. This alternative pathway is inhibited by GADD45A. Inhibited by dual specificity phosphatases, such as DUSP1, DUSP10, and DUSP16. Specifically inhibited by the binding of pyridinyl-imidazole compounds, which are cytokine-suppressive anti-inflammatory drugs (CSAID). SB203580 is an inhibitor of MAPK14. Serine/threonine kinase which acts as an essential component of the MAP kinase signal transduction pathway. MAPK14 is one of the four p38 MAPKs which play an important role in the cascades of cellular responses evoked by extracellular stimuli such as pro-inflammatory cytokines or physical stress leading to direct activation of transcription factors. Accordingly, p38 MAPKs phosphorylate a broad range of proteins and it has been estimated that they may have approximately 200 to 300 substrates each. Some of the targets are downstream kinases which are activated through phosphorylation and further phosphorylate additional targets. RPS6KA5/MSK1 and RPS6KA4/MSK2 can directly phosphorylate and activate transcription factors such as CREB1, ATF1, the NF-kappa-B isoform RELA/NFKB3, STAT1 and STAT3, but can also phosphorylate histone H3 and the nucleosomal protein HMGN1. RPS6KA5/MSK1 and RPS6KA4/MSK2 play important roles in the rapid induction of immediate-early genes in response to stress or mitogenic stimuli, either by inducing chromatin remodeling or by recruiting the transcription machinery. On the other hand, two other kinase targets, MAPKAPK2/MK2 and MAPKAPK3/MK3, participate in the control of gene expression mostly at the post-transcriptional level, by phosphorylating ZFP36 (tristetraprolin) and ELAVL1, and by regulating EEF2K, which is important for the elongation of mRNA during translation. MKNK1/MNK1 and MKNK2/MNK2, two other kinases activated by p38 MAPKs, regulate protein synthesis by phosphorylating the initiation factor EIF4E2. MAPK14 also interacts with casein kinase II, leading to its activation through autophosphorylation and further phosphorylation of TP53/p53. In the cytoplasm, the p38 MAPK pathway is an important regulator of protein turnover. For example, CFLAR is an inhibitor of TNF-induced apoptosis whose proteasome-mediated degradation is regulated by p38 MAPK phosphorylation. In a similar way, MAPK14 phosphorylates the ubiquitin ligase SIAH2, regulating its activity towards EGLN3. MAPK14 may also inhibit the lysosomal degradation pathway of autophagy by interfering with the intracellular trafficking of the transmembrane protein ATG9. Another function of MAPK14 is to regulate the endocytosis of membrane receptors by different mechanisms that impinge on the small GTPase RAB5A. In addition, clathrin-mediated EGFR internalization induced by inflammatory cytokines and UV irradiation depends on MAPK14-mediated phosphorylation of EGFR itself as well as of RAB5A effectors. Ectodomain shedding of transmembrane proteins is regulated by p38 MAPKs as well. In response to inflammatory stimuli, p38 MAPKs phosphorylate the membrane-associated metalloprotease ADAM17. Such phosphorylation is required for ADAM17-mediated ectodomain shedding of TGF-alpha family ligands, which results in the activation of EGFR signaling and cell proliferation. Another p38 MAPK substrate is FGFR1. FGFR1 can be translocated from the extracellular space into the cytosol and nucleus of target cells, and regulates processes such as rRNA synthesis and cell growth. FGFR1 translocation requires p38 MAPK activation. In the nucleus, many transcription factors are phosphorylated and activated by p38 MAPKs in response to different stimuli. Classical examples include ATF1, ATF2, ATF6, ELK1, PTPRH, DDIT3, TP53/p53 and MEF2C and MEF2A. The p38 MAPKs are emerging as important modulators of gene expression by regulating chromatin modifiers and remodelers. The promoters of several genes involved in the inflammatory response, such as IL6, IL8 and IL12B, display a p38 MAPK-dependent enrichment of histone H3 phosphorylation on 'Ser-10' (H3S10ph) in LPS-stimulated myeloid cells. This phosphorylation enhances the accessibility of the cryptic NF-kappa-B-binding sites marking promoters for increased NF-kappa-B recruitment. Phosphorylates CDC25B and CDC25C which is required for binding to 14-3-3 proteins and leads to initiation of a G2 delay after ultraviolet radiation. Phosphorylates TIAR following DNA damage, releasing TIAR from GADD45A mRNA and preventing mRNA degradation. The p38 MAPKs may also have kinase-independent roles, which are thought to be due to the binding to targets in the absence of phosphorylation. Protein O-Glc-N-acylation catalyzed by the OGT is regulated by MAPK14, and, although OGT does not seem to be phosphorylated by MAPK14, their interaction increases upon MAPK14 activation induced by glucose deprivation. This interaction may regulate OGT activity by recruiting it to specific targets such as neurofilament H, stimulating its O-Glc-N-acylation. Required in mid-fetal development for the growth of embryo-derived blood vessels in the labyrinth layer of the placenta. Also plays an essential role in developmental and stress-induced erythropoiesis, through regulation of EPO gene expression. Phosphorylates S100A9 at 'Thr-113'. This is Mitogen-activated protein kinase 14 from Pan troglodytes (Chimpanzee).